Here is a 51-residue protein sequence, read N- to C-terminus: Conotoxin Cal6.33 (51 aa).

The N-terminal stretch at 1 to 22 (MKLTCVVIIAVLILTACQFTTA) is a signal peptide. Disulfide bonds link cysteine 25-cysteine 39, cysteine 32-cysteine 43, and cysteine 38-cysteine 50.

Belongs to the conotoxin O1 superfamily. As to expression, expressed by the venom duct.

The protein resides in the secreted. Probable neurotoxin. This is Conotoxin Cal6.33 from Californiconus californicus (California cone).